Reading from the N-terminus, the 315-residue chain is 3-chlorobenzoate-3,4-dioxygenase reductase subunit (315 aa).

Residue 1–103 coordinates FMN; that stretch reads MVAIDQHDTY…GATTRISAPR (103 aa). The region spanning 7–109 is the FAD-binding FR-type domain; that stretch reads HDTYSVRVIS…SAPRNAFALD (103 aa). The 88-residue stretch at 228–315 folds into the 2Fe-2S ferredoxin-type domain; sequence NEFTVNLARS…ALSPELTLDL (88 aa). Residues cysteine 264, cysteine 269, cysteine 272, and cysteine 302 each contribute to the [2Fe-2S] cluster site.

Belongs to the PDR/VanB family. In terms of assembly, this dioxygenase system consists of two proteins: phthalate oxygenase and phthalate oxygenase reductase. FMN is required as a cofactor.

The protein is 3-chlorobenzoate-3,4-dioxygenase reductase subunit (cbaB) of Comamonas testosteroni (Pseudomonas testosteroni).